We begin with the raw amino-acid sequence, 332 residues long: MTASSRPAEYRDVRTANLNTITFDNLFDKDEAELKRLIESCEKDGFFYLDLKSAASQKFWNDLYTIDSTTKDWFKQPIEKKLQTPTVSLAHGFKAVGNQSGSIESKKDGFEALKIGKSELDGRWALPDVVSDNLPLFDQFASSCHFISKLLLDCLSDGLNLKGDARFETHHRDDCRSKSTLYFLHYPPGAQDPNKVGQNMHTDIGTLTILYAPQWGLQVFSPADGAWEYVEPRPNQIIVNVGDTLRFLSGKRFKSALHRVLPLGGIQIEDRYSISYFLRASDSTEFKDSDEDESNAKQWYTKKYAMYEMPHVIQKQQTTLSGGMAQELQATF.

Positions 176-280 constitute a Fe2OG dioxygenase domain; that stretch reads RSKSTLYFLH…RYSISYFLRA (105 aa). Fe cation-binding residues include H201, D203, and H258. Position 271 (R271) interacts with 2-oxoglutarate.

The protein belongs to the iron/ascorbate-dependent oxidoreductase family. Fe(2+) serves as cofactor.

It functions in the pathway mycotoxin biosynthesis. In terms of biological role, 2-oxoglutarate-dependent dioxygenase; part of the gene cluster that mediates the biosynthesis of butenolide, a mycotoxin that shows antibiotic activity but does not seem to play a major role in the spread of head blight in wheat. Butenolide is derived from glutamic acid via a 4-acetamido-2-butenoic acid intermediate. The predicted function of the NADH:flavin oxidoreductase FG08077, the cytochrome P450 monooxygenase FG08079, the decarboxylase FG08083, and the putative acetyltransferase FG08082 are consistent with this pathway, however, the respective activities of the butelonide biosynthesis cluster enzymes have still to be experimentally determined. This Gibberella zeae (strain ATCC MYA-4620 / CBS 123657 / FGSC 9075 / NRRL 31084 / PH-1) (Wheat head blight fungus) protein is 2-oxoglutarate-dependent dioxygenase FG08081.